Here is a 211-residue protein sequence, read N- to C-terminus: Thymidylate kinase (211 aa).

Position 7 to 14 (7 to 14 (GIDGCGKT)) interacts with ATP.

The protein belongs to the thymidylate kinase family.

The catalysed reaction is dTMP + ATP = dTDP + ADP. Its function is as follows. Phosphorylation of dTMP to form dTDP in both de novo and salvage pathways of dTTP synthesis. In Anaplasma marginale (strain Florida), this protein is Thymidylate kinase.